A 557-amino-acid polypeptide reads, in one-letter code: uncharacterized protein (557 aa).

One can recognise a Helicase ATP-binding domain in the interval Lys70–Gly224. Ala82 to Thr90 provides a ligand contact to ATP. The DEAH box signature appears at Asp175 to His178. The region spanning Gln363 to Leu524 is the Helicase C-terminal domain.

Belongs to the SNF2/RAD54 helicase family.

This is an uncharacterized protein from Bacillus subtilis (strain 168).